A 314-amino-acid chain; its full sequence is tRNA dimethylallyltransferase (314 aa).

Position 9–16 (9–16 (GPTAVGKT)) interacts with ATP. 11 to 16 (TAVGKT) contributes to the substrate binding site. An interaction with substrate tRNA region spans residues 34-37 (DSVQ).

This sequence belongs to the IPP transferase family. In terms of assembly, monomer. Mg(2+) is required as a cofactor.

The enzyme catalyses adenosine(37) in tRNA + dimethylallyl diphosphate = N(6)-dimethylallyladenosine(37) in tRNA + diphosphate. Catalyzes the transfer of a dimethylallyl group onto the adenine at position 37 in tRNAs that read codons beginning with uridine, leading to the formation of N6-(dimethylallyl)adenosine (i(6)A). In Desulfitobacterium hafniense (strain Y51), this protein is tRNA dimethylallyltransferase.